The following is a 269-amino-acid chain: 5'-nucleotidase SurE (269 aa).

4 residues coordinate a divalent metal cation: Asp-8, Asp-9, Ser-40, and Asn-95.

The protein belongs to the SurE nucleotidase family. A divalent metal cation serves as cofactor.

It is found in the cytoplasm. The enzyme catalyses a ribonucleoside 5'-phosphate + H2O = a ribonucleoside + phosphate. In terms of biological role, nucleotidase that shows phosphatase activity on nucleoside 5'-monophosphates. The protein is 5'-nucleotidase SurE of Nitratidesulfovibrio vulgaris (strain DSM 19637 / Miyazaki F) (Desulfovibrio vulgaris).